A 353-amino-acid chain; its full sequence is DNA polymerase IV (353 aa).

The UmuC domain maps to 14–198 (IIHIDMDAFF…MDISKFHGVG (185 aa)). Mg(2+) is bound by residues D18 and D116. E117 is a catalytic residue.

This sequence belongs to the DNA polymerase type-Y family. Monomer. It depends on Mg(2+) as a cofactor.

The protein resides in the cytoplasm. It catalyses the reaction DNA(n) + a 2'-deoxyribonucleoside 5'-triphosphate = DNA(n+1) + diphosphate. Functionally, poorly processive, error-prone DNA polymerase involved in untargeted mutagenesis. Copies undamaged DNA at stalled replication forks, which arise in vivo from mismatched or misaligned primer ends. These misaligned primers can be extended by PolIV. Exhibits no 3'-5' exonuclease (proofreading) activity. May be involved in translesional synthesis, in conjunction with the beta clamp from PolIII. The polypeptide is DNA polymerase IV (Streptococcus pneumoniae serotype 2 (strain D39 / NCTC 7466)).